The primary structure comprises 264 residues: Synaptophysin-like protein 2 (264 aa).

The Cytoplasmic portion of the chain corresponds to 1–33 (MSSTESPGRTSDKSPRQQVDRLLLGLRWQRLEE). The MARVEL domain occupies 30 to 238 (RLEEPLGFIK…NCWFVFKETP (209 aa)). A helical transmembrane segment spans residues 34-54 (PLGFIKVLQWLFAIFAFGSCG). The Vesicular segment spans residues 55–116 (SYSGETGALV…LMGDFSAPAE (62 aa)). A helical transmembrane segment spans residues 117–137 (FFVTLGIFSFFYTMAALVIYL). The Cytoplasmic portion of the chain corresponds to 138 to 150 (RFHKLYTENKRFP). A helical transmembrane segment spans residues 151-171 (LVDFCVTVSFTFFWLVAAAAW). Residues 172–213 (GKGLTDVKGATRPSSLTAAMSVCHGEEAVCSAGATPSMGLAN) are Vesicular-facing. Residue Asn213 is glycosylated (N-linked (GlcNAc...) asparagine). A helical transmembrane segment spans residues 214–234 (LSVLFGFINFFLWAGNCWFVF). Residues 235–264 (KETPWHGQGQDQGQGPSQESAAEQGAVEKQ) are Cytoplasmic-facing. Residues 242 to 264 (QGQDQGQGPSQESAAEQGAVEKQ) are disordered.

The protein belongs to the synaptophysin/synaptobrevin family. Expressed abundantly in skeletal muscle and at lower levels in the kidney.

It is found in the membrane. Involved in communication between the T-tubular and junctional sarcoplasmic reticulum (SR) membranes. The polypeptide is Synaptophysin-like protein 2 (Sypl2) (Mus musculus (Mouse)).